The primary structure comprises 100 residues: uncharacterized protein (100 aa).

2 helical membrane-spanning segments follow: residues Leu-50–Phe-70 and Asp-75–Val-95.

The protein localises to the membrane. This is an uncharacterized protein from Saccharomyces cerevisiae (strain ATCC 204508 / S288c) (Baker's yeast).